The chain runs to 57 residues: Large ribosomal subunit protein bL32 (57 aa).

Over residues 1-19 the composition is skewed to basic residues; the sequence is MAVPKRRKSRSNTRSRRSQ. The disordered stretch occupies residues 1 to 22; that stretch reads MAVPKRRKSRSNTRSRRSQWKA.

It belongs to the bacterial ribosomal protein bL32 family.

This Mycobacterium tuberculosis (strain ATCC 25177 / H37Ra) protein is Large ribosomal subunit protein bL32.